The chain runs to 304 residues: KIN17-like protein (304 aa).

The segment at 26–50 adopts a C2H2-type zinc-finger fold; it reads WYCSACQKQMRDENGFKCHTQSEGH. Disordered regions lie at residues 204 to 228 and 261 to 291; these read IDLSKKGNPIQLNLSSSSDSHSAQN and LNKSRKKNNKDSLDQGQNVKRPRSAVEDIIA.

Belongs to the KIN17 family.

It localises to the nucleus. The protein resides in the nucleolus. The polypeptide is KIN17-like protein (Schizosaccharomyces pombe (strain 972 / ATCC 24843) (Fission yeast)).